The sequence spans 363 residues: Pyrimidine monooxygenase RutA (363 aa).

FMN-binding positions include 49-50, Asn-115, Glu-124, 140-141, and Ser-190; these read IK and RY.

It belongs to the NtaA/SnaA/DszA monooxygenase family. RutA subfamily.

It carries out the reaction uracil + FMNH2 + NADH + O2 = (Z)-3-ureidoacrylate + FMN + NAD(+) + H2O + H(+). It catalyses the reaction thymine + FMNH2 + NADH + O2 = (Z)-2-methylureidoacrylate + FMN + NAD(+) + H2O + H(+). In terms of biological role, catalyzes the pyrimidine ring opening between N-3 and C-4 by an unusual flavin hydroperoxide-catalyzed mechanism, adding oxygen atoms in the process to yield ureidoacrylate peracid, that immediately reacts with FMN forming ureidoacrylate and FMN-N(5)-oxide. The FMN-N(5)-oxide reacts spontaneously with NADH to produce FMN. Requires the flavin reductase RutF to regenerate FMN in vivo. This Escherichia coli O157:H7 (strain EC4115 / EHEC) protein is Pyrimidine monooxygenase RutA.